The following is a 399-amino-acid chain: Accessory Sec system protein translocase subunit SecY2 (399 aa).

The next 10 helical transmembrane spans lie at 14–34 (IFFT…SIVS), 60–80 (LNIF…LTLI), 102–122 (ALTL…YINK), 128–148 (SNML…VWLA), 152–172 (TTYG…KSIF), 183–203 (ASLI…LFFI), 237–257 (ISIM…NFIG), 272–292 (FTNP…GYFL), 335–355 (WFGS…ALLV), and 362–382 (VYFT…AETI).

The protein belongs to the SecY/SEC61-alpha family. SecY2 subfamily. In terms of assembly, component of the accessory SecA2/SecY2 protein translocase complex required to export cell wall proteins. May form heterotrimers with SecE and SecG subunits.

It is found in the cell membrane. Part of the accessory SecA2/SecY2 system specifically required for export of possible cell wall proteins. The central subunit of a protein translocation channel. The polypeptide is Accessory Sec system protein translocase subunit SecY2 (Staphylococcus epidermidis (strain ATCC 12228 / FDA PCI 1200)).